The following is a 209-amino-acid chain: Glutathione S-transferase 1-1 (209 aa).

Residues 1–81 enclose the GST N-terminal domain; sequence MADFYYLPGS…YLVEKYGKTD (81 aa). Glutathione is bound by residues Ser10, 51-53, and 65-67; these read HTI and ESR. Positions 87-209 constitute a GST C-terminal domain; sequence CPKKRAVINQ…GCLEFKKFFE (123 aa).

The protein belongs to the GST superfamily. Theta family. As to quaternary structure, homodimer.

It carries out the reaction RX + glutathione = an S-substituted glutathione + a halide anion + H(+). The catalysed reaction is 1,1,1-trichloro-2,2-bis(4-chlorophenyl)ethane = 1,1-dichloro-2,2-bis(4-chlorophenyl)ethylene + chloride + H(+). Its function is as follows. Conjugation of reduced glutathione to a wide number of exogenous and endogenous hydrophobic electrophiles. Has DDT dehydrochlorinase activity. This chain is Glutathione S-transferase 1-1 (GstD1), found in Drosophila sechellia (Fruit fly).